We begin with the raw amino-acid sequence, 193 residues long: Acyl carrier protein phosphodiesterase (193 aa).

Belongs to the AcpH family.

It carries out the reaction holo-[ACP] + H2O = apo-[ACP] + (R)-4'-phosphopantetheine + H(+). Converts holo-ACP to apo-ACP by hydrolytic cleavage of the phosphopantetheine prosthetic group from ACP. This is Acyl carrier protein phosphodiesterase from Escherichia coli O7:K1 (strain IAI39 / ExPEC).